A 277-amino-acid polypeptide reads, in one-letter code: Caspase-3 (277 aa).

Met1 bears the N-acetylmethionine mark. Propeptides lie at residues 1-9 (MENTENSVD) and 10-28 (SKSI…QSMD). A compositionally biased stretch (polar residues) spans 1–10 (MENTENSVDS). The interval 1–20 (MENTENSVDSKSIKNLEPKI) is disordered. The residue at position 11 (Lys11) is an N6-acetyllysine. Residues 11–20 (KSIKNLEPKI) are compositionally biased toward basic and acidic residues. At Ser26 the chain carries Phosphoserine. Catalysis depends on residues His121 and Cys163. Cys163 carries the post-translational modification S-nitrosocysteine; in inhibited form.

This sequence belongs to the peptidase C14A family. Heterotetramer that consists of two anti-parallel arranged heterodimers, each one formed by a 17 kDa (p17) and a 12 kDa (p12) subunit. Interacts with BIRC6/bruce. Cleavage by granzyme B, caspase-6, caspase-8 and caspase-10 generates the two active subunits. Additional processing of the propeptides is likely due to the autocatalytic activity of the activated protease. Active heterodimers between the small subunit of caspase-7 protease and the large subunit of caspase-3 also occur and vice versa. Post-translationally, S-nitrosylated on its catalytic site cysteine in unstimulated cell lines and denitrosylated upon activation of the Fas apoptotic pathway, associated with an increase in intracellular caspase activity. Fas therefore activates caspase-3 not only by inducing the cleavage of the caspase zymogen to its active subunits, but also by stimulating the denitrosylation of its active site thiol. In terms of processing, ubiquitinated by BIRC6; this activity is inhibited by DIABLO/SMAC.

The protein localises to the cytoplasm. It carries out the reaction Strict requirement for an Asp residue at positions P1 and P4. It has a preferred cleavage sequence of Asp-Xaa-Xaa-Asp-|- with a hydrophobic amino-acid residue at P2 and a hydrophilic amino-acid residue at P3, although Val or Ala are also accepted at this position.. Its activity is regulated as follows. Inhibited by BIRC6; following inhibition of BIRC6-caspase binding by DIABLO/SMAC, BIRC6 is subjected to caspase cleavage, leading to an increase in active caspases. Involved in the activation cascade of caspases responsible for apoptosis execution. At the onset of apoptosis, it proteolytically cleaves poly(ADP-ribose) polymerase PARP1 at a '216-Asp-|-Gly-217' bond. Cleaves and activates sterol regulatory element binding proteins (SREBPs) between the basic helix-loop-helix leucine zipper domain and the membrane attachment domain. Cleaves and activates caspase-6, -7 and -9 (CASP6, CASP7 and CASP9, respectively). Cleaves and inactivates interleukin-18 (IL18). Triggers cell adhesion in sympathetic neurons through RET cleavage. Cleaves IL-1 beta between an Asp and an Ala, releasing the mature cytokine which is involved in a variety of inflammatory processes. Cleaves and inhibits serine/threonine-protein kinase AKT1 in response to oxidative stress. Acts as an inhibitor of type I interferon production during virus-induced apoptosis by mediating cleavage of antiviral proteins CGAS, IRF3 and MAVS, thereby preventing cytokine overproduction. Also involved in pyroptosis by mediating cleavage and activation of gasdermin-E (GSDME). Cleaves XRCC4 and phospholipid scramblase proteins XKR4, XKR8 and XKR9, leading to promote phosphatidylserine exposure on apoptotic cell surface. Cleaves BIRC6 following inhibition of BIRC6-caspase binding by DIABLO/SMAC. This chain is Caspase-3 (CASP3), found in Pan troglodytes (Chimpanzee).